Here is a 404-residue protein sequence, read N- to C-terminus: Cysteine desulfurase IscS (404 aa).

Pyridoxal 5'-phosphate-binding positions include Ala-75–Thr-76, Asn-155, Gln-183, and Ser-203–His-205. The residue at position 206 (Lys-206) is an N6-(pyridoxal phosphate)lysine. Thr-243 contributes to the pyridoxal 5'-phosphate binding site. Cys-328 serves as the catalytic Cysteine persulfide intermediate. Cys-328 lines the [2Fe-2S] cluster pocket.

It belongs to the class-V pyridoxal-phosphate-dependent aminotransferase family. NifS/IscS subfamily. In terms of assembly, homodimer. Forms a heterotetramer with IscU, interacts with other sulfur acceptors. It depends on pyridoxal 5'-phosphate as a cofactor.

Its subcellular location is the cytoplasm. The enzyme catalyses (sulfur carrier)-H + L-cysteine = (sulfur carrier)-SH + L-alanine. Its pathway is cofactor biosynthesis; iron-sulfur cluster biosynthesis. Its function is as follows. Master enzyme that delivers sulfur to a number of partners involved in Fe-S cluster assembly, tRNA modification or cofactor biosynthesis. Catalyzes the removal of elemental sulfur and selenium atoms from cysteine and selenocysteine to produce alanine. Functions as a sulfur delivery protein for Fe-S cluster synthesis onto IscU, an Fe-S scaffold assembly protein, as well as other S acceptor proteins. Also functions as a selenium delivery protein in the pathway for the biosynthesis of selenophosphate. The sequence is that of Cysteine desulfurase IscS from Salmonella gallinarum (strain 287/91 / NCTC 13346).